The chain runs to 410 residues: LL-diaminopimelate aminotransferase (410 aa).

Positions 15 and 42 each coordinate substrate. Residues Tyr72, 108–109 (AK), Tyr132, Asn188, Tyr219, and 247–249 (SFS) contribute to the pyridoxal 5'-phosphate site. Residues Lys109, Tyr132, and Asn188 each contribute to the substrate site. An N6-(pyridoxal phosphate)lysine modification is found at Lys250. Pyridoxal 5'-phosphate contacts are provided by Arg258 and Asn293. Positions 293 and 389 each coordinate substrate.

Belongs to the class-I pyridoxal-phosphate-dependent aminotransferase family. LL-diaminopimelate aminotransferase subfamily. In terms of assembly, homodimer. Requires pyridoxal 5'-phosphate as cofactor.

The catalysed reaction is (2S,6S)-2,6-diaminopimelate + 2-oxoglutarate = (S)-2,3,4,5-tetrahydrodipicolinate + L-glutamate + H2O + H(+). The protein operates within amino-acid biosynthesis; L-lysine biosynthesis via DAP pathway; LL-2,6-diaminopimelate from (S)-tetrahydrodipicolinate (aminotransferase route): step 1/1. Functionally, involved in the synthesis of meso-diaminopimelate (m-DAP or DL-DAP), required for both lysine and peptidoglycan biosynthesis. Catalyzes the direct conversion of tetrahydrodipicolinate to LL-diaminopimelate. In Bacteroides fragilis (strain YCH46), this protein is LL-diaminopimelate aminotransferase.